A 417-amino-acid polypeptide reads, in one-letter code: Leucine-rich repeat-containing protein 42 (417 aa).

4 LRR repeats span residues 167–188 (CLHS…LAHL), 195–215 (SLTE…QKMT), 227–248 (KLKV…CFLF), and 252–273 (LLKF…LKKI). Residues 360 to 390 (FFRPKEQKDPDSSNSEKRRHSTKRTGADCVQ) form a disordered region. Positions 362–375 (RPKEQKDPDSSNSE) are enriched in basic and acidic residues.

The protein belongs to the LRRC42 family.

The protein is Leucine-rich repeat-containing protein 42 (lrrc42) of Xenopus laevis (African clawed frog).